Here is a 511-residue protein sequence, read N- to C-terminus: 2,3-bisphosphoglycerate-independent phosphoglycerate mutase (511 aa).

Asp12 and Ser62 together coordinate Mn(2+). Ser62 functions as the Phosphoserine intermediate in the catalytic mechanism. Residues His123, 154–155 (RD), Arg181, Arg187, 252–255 (RPDR), and Lys335 each bind substrate. The Mn(2+) site is built by Asp402, His406, Asp444, His445, and His462.

Belongs to the BPG-independent phosphoglycerate mutase family. Monomer. The cofactor is Mn(2+).

The enzyme catalyses (2R)-2-phosphoglycerate = (2R)-3-phosphoglycerate. Its pathway is carbohydrate degradation; glycolysis; pyruvate from D-glyceraldehyde 3-phosphate: step 3/5. Its function is as follows. Catalyzes the interconversion of 2-phosphoglycerate and 3-phosphoglycerate. The sequence is that of 2,3-bisphosphoglycerate-independent phosphoglycerate mutase from Acholeplasma laidlawii (strain PG-8A).